The chain runs to 156 residues: Small ribosomal subunit protein uS7 (156 aa).

The protein belongs to the universal ribosomal protein uS7 family. As to quaternary structure, part of the 30S ribosomal subunit. Contacts proteins S9 and S11.

Functionally, one of the primary rRNA binding proteins, it binds directly to 16S rRNA where it nucleates assembly of the head domain of the 30S subunit. Is located at the subunit interface close to the decoding center, probably blocks exit of the E-site tRNA. The protein is Small ribosomal subunit protein uS7 of Nitrosomonas europaea (strain ATCC 19718 / CIP 103999 / KCTC 2705 / NBRC 14298).